The chain runs to 188 residues: Elongation factor P-like protein (188 aa).

Belongs to the elongation factor P family.

This chain is Elongation factor P-like protein, found in Vibrio parahaemolyticus serotype O3:K6 (strain RIMD 2210633).